Consider the following 47-residue polypeptide: Delta-ctenitoxin-Asp2e (47 aa).

Intrachain disulfides connect cysteine 3/cysteine 17, cysteine 10/cysteine 23, cysteine 14/cysteine 46, cysteine 16/cysteine 31, and cysteine 25/cysteine 29.

As to expression, expressed by the venom gland.

It is found in the secreted. In terms of biological role, inhibits the inactivation of voltage-gated sodium channels (Nav). The protein is Delta-ctenitoxin-Asp2e of Ancylometes sp. (South American fishing spider).